The chain runs to 31 residues: Cyclotide psybry A (31 aa).

The segment at residues 1-31 (GFNPCGETCIWFPTCHAPGCTCSIANICVRN) is a cross-link (cyclopeptide (Gly-Asn)). 3 disulfides stabilise this stretch: C5–C20, C9–C22, and C15–C28.

This is a cyclic peptide.

Functionally, probably participates in a plant defense mechanism. The protein is Cyclotide psybry A of Psychotria brachyceras.